Consider the following 272-residue polypeptide: Phosphatidylglycerol--prolipoprotein diacylglyceryl transferase (272 aa).

Transmembrane regions (helical) follow at residues 17 to 37, 55 to 75, 90 to 110, 125 to 145, 174 to 194, 202 to 222, and 230 to 250; these read LQVH…WGLA, LVFY…VLFY, VWTG…AMLF, FIAP…FIGG, PSQI…LWWF, MAVS…MEFF, and GFIL…MLLI. An a 1,2-diacyl-sn-glycero-3-phospho-(1'-sn-glycerol)-binding site is contributed by R138.

Belongs to the Lgt family.

The protein localises to the cell inner membrane. It carries out the reaction L-cysteinyl-[prolipoprotein] + a 1,2-diacyl-sn-glycero-3-phospho-(1'-sn-glycerol) = an S-1,2-diacyl-sn-glyceryl-L-cysteinyl-[prolipoprotein] + sn-glycerol 1-phosphate + H(+). Its pathway is protein modification; lipoprotein biosynthesis (diacylglyceryl transfer). Functionally, catalyzes the transfer of the diacylglyceryl group from phosphatidylglycerol to the sulfhydryl group of the N-terminal cysteine of a prolipoprotein, the first step in the formation of mature lipoproteins. The polypeptide is Phosphatidylglycerol--prolipoprotein diacylglyceryl transferase (Acinetobacter baumannii (strain SDF)).